The primary structure comprises 454 residues: Gastrin/cholecystokinin type B receptor (454 aa).

The Extracellular segment spans residues 1 to 57; the sequence is MELLKPNRSVLGSGPGPGASLCRSGGPLLNGSGTGNLSCEPPRIRGAGTRELELAIR. N-linked (GlcNAc...) asparagine glycosylation is found at Asn7, Asn30, and Asn36. A helical transmembrane segment spans residues 58–79; the sequence is VTLYAVIFLMSVGGNVLIIVVL. Over 80–87 the chain is Cytoplasmic; the sequence is GLSRRLRT. A helical transmembrane segment spans residues 88 to 109; it reads VTNAFLLSLAVSDLLLAVACMP. At 110–131 the chain is on the extracellular side; the sequence is FTLLPNLMGTFIFGTVVCKAVS. Residues Cys127 and Cys205 are joined by a disulfide bond. A helical membrane pass occupies residues 132–150; the sequence is YFMGVSVSVSTLSLVAIAL. The Cytoplasmic segment spans residues 151-170; the sequence is ERYSAICRPLQARVWQTRSH. Residues 171-189 traverse the membrane as a helical segment; that stretch reads AARVIVATWMLSGLLMVPY. Over 190–219 the chain is Extracellular; that stretch reads PVYTAVQPAGPRVLQCMHRWPSARVRQTWS. A helical membrane pass occupies residues 220–242; the sequence is VLLLLLLFFVPGVVMAVAYGLIS. Topologically, residues 243–340 are cytoplasmic; sequence RELYLGLRFD…KLLAKKRVVR (98 aa). Residues 257–284 are disordered; it reads SESQSRVGSQGGLPGGTGQGPAQANGRC. The segment covering 265–275 has biased composition (gly residues); sequence SQGGLPGGTGQ. Residues 341–362 form a helical membrane-spanning segment; sequence MLLVIVVLFFLCWLPVYSANTW. At 363-380 the chain is on the extracellular side; that stretch reads RAFDGPGAHRALSGAPIS. The helical transmembrane segment at 381–401 threads the bilayer; it reads FIHLLTYASACVNPLVYCFMH. Over 402-454 the chain is Cytoplasmic; sequence RRFRQACLDTCTRCCPRPPRARPRPLPDEDPPTPSIASLSRLSYTTISTLGPG. Cys415 carries the S-palmitoyl cysteine lipid modification. The interval 422–441 is disordered; sequence ARPRPLPDEDPPTPSIASLS.

Belongs to the G-protein coupled receptor 1 family.

The protein localises to the cell membrane. In terms of biological role, receptor for gastrin and cholecystokinin. The CCK-B receptors occur throughout the central nervous system where they modulate anxiety, analgesia, arousal, and neuroleptic activity. This receptor mediates its action by association with G proteins that activate a phosphatidylinositol-calcium second messenger system. This chain is Gastrin/cholecystokinin type B receptor (CCKBR), found in Bos taurus (Bovine).